Consider the following 983-residue polypeptide: Glycine dehydrogenase (decarboxylating) (983 aa).

N6-(pyridoxal phosphate)lysine is present on Lys-726.

The protein belongs to the GcvP family. In terms of assembly, the glycine cleavage system is composed of four proteins: P, T, L and H. It depends on pyridoxal 5'-phosphate as a cofactor.

The enzyme catalyses N(6)-[(R)-lipoyl]-L-lysyl-[glycine-cleavage complex H protein] + glycine + H(+) = N(6)-[(R)-S(8)-aminomethyldihydrolipoyl]-L-lysyl-[glycine-cleavage complex H protein] + CO2. Its function is as follows. The glycine cleavage system catalyzes the degradation of glycine. The P protein binds the alpha-amino group of glycine through its pyridoxal phosphate cofactor; CO(2) is released and the remaining methylamine moiety is then transferred to the lipoamide cofactor of the H protein. In Synechocystis sp. (strain ATCC 27184 / PCC 6803 / Kazusa), this protein is Glycine dehydrogenase (decarboxylating).